Here is a 198-residue protein sequence, read N- to C-terminus: dCTP deaminase, dUMP-forming (198 aa).

DCTP-binding positions include 115–120, aspartate 133, 141–143, glutamine 162, tyrosine 175, and lysine 184; these read KSSIAR and TLE. The Proton donor/acceptor role is filled by glutamate 143.

This sequence belongs to the dCTP deaminase family. Homotrimer.

It catalyses the reaction dCTP + 2 H2O = dUMP + NH4(+) + diphosphate. It functions in the pathway pyrimidine metabolism; dUMP biosynthesis; dUMP from dCTP: step 1/1. Its function is as follows. Bifunctional enzyme that catalyzes both the deamination of dCTP to dUTP and the hydrolysis of dUTP to dUMP without releasing the toxic dUTP intermediate. This Nanoarchaeum equitans (strain Kin4-M) protein is dCTP deaminase, dUMP-forming.